Here is a 326-residue protein sequence, read N- to C-terminus: Vitamin B12 import system permease protein BtuC (326 aa).

Helical transmembrane passes span 19-39 (LSVL…LWIL), 61-81 (LAVL…QALF), 88-108 (PGLL…VLLG), 112-132 (LPNW…TLIL), 146-166 (LLAG…AIYF), 184-204 (GGVD…LLWI), 240-260 (GWMV…GLVI), 274-294 (VLLP…DIVA), and 302-322 (ELPI…WLLL).

This sequence belongs to the binding-protein-dependent transport system permease family. FecCD subfamily. As to quaternary structure, the complex is composed of two ATP-binding proteins (BtuD), two transmembrane proteins (BtuC) and a solute-binding protein (BtuF).

The protein resides in the cell inner membrane. Functionally, part of the ABC transporter complex BtuCDF involved in vitamin B12 import. Involved in the translocation of the substrate across the membrane. The polypeptide is Vitamin B12 import system permease protein BtuC (Escherichia coli O6:K15:H31 (strain 536 / UPEC)).